We begin with the raw amino-acid sequence, 117 residues long: Large ribosomal subunit protein uL18 (117 aa).

This sequence belongs to the universal ribosomal protein uL18 family. As to quaternary structure, part of the 50S ribosomal subunit; part of the 5S rRNA/L5/L18/L25 subcomplex. Contacts the 5S and 23S rRNAs.

Functionally, this is one of the proteins that bind and probably mediate the attachment of the 5S RNA into the large ribosomal subunit, where it forms part of the central protuberance. This Enterobacter sp. (strain 638) protein is Large ribosomal subunit protein uL18.